Here is a 138-residue protein sequence, read N- to C-terminus: Ribosome-binding factor A (138 aa).

The segment at 112-138 is disordered; that stretch reads EARTQGQEPAADVEPAPGAAPDDEAEE. Residues 119–131 are compositionally biased toward low complexity; it reads EPAADVEPAPGAA.

This sequence belongs to the RbfA family. As to quaternary structure, monomer. Binds 30S ribosomal subunits, but not 50S ribosomal subunits or 70S ribosomes.

It localises to the cytoplasm. One of several proteins that assist in the late maturation steps of the functional core of the 30S ribosomal subunit. Associates with free 30S ribosomal subunits (but not with 30S subunits that are part of 70S ribosomes or polysomes). Required for efficient processing of 16S rRNA. May interact with the 5'-terminal helix region of 16S rRNA. In Anaeromyxobacter dehalogenans (strain 2CP-C), this protein is Ribosome-binding factor A.